The following is a 207-amino-acid chain: Thiamine-phosphate synthase (207 aa).

Residues 36 to 40 (QMRIK) and D68 each bind 4-amino-2-methyl-5-(diphosphooxymethyl)pyrimidine. The Mg(2+) site is built by D69 and D88. 4-amino-2-methyl-5-(diphosphooxymethyl)pyrimidine is bound at residue S106. 132–134 (TKT) contributes to the 2-[(2R,5Z)-2-carboxy-4-methylthiazol-5(2H)-ylidene]ethyl phosphate binding site. Position 135 (K135) interacts with 4-amino-2-methyl-5-(diphosphooxymethyl)pyrimidine. Residues G162 and 182-183 (IS) contribute to the 2-[(2R,5Z)-2-carboxy-4-methylthiazol-5(2H)-ylidene]ethyl phosphate site.

The protein belongs to the thiamine-phosphate synthase family. Mg(2+) is required as a cofactor.

The enzyme catalyses 2-[(2R,5Z)-2-carboxy-4-methylthiazol-5(2H)-ylidene]ethyl phosphate + 4-amino-2-methyl-5-(diphosphooxymethyl)pyrimidine + 2 H(+) = thiamine phosphate + CO2 + diphosphate. The catalysed reaction is 2-(2-carboxy-4-methylthiazol-5-yl)ethyl phosphate + 4-amino-2-methyl-5-(diphosphooxymethyl)pyrimidine + 2 H(+) = thiamine phosphate + CO2 + diphosphate. It carries out the reaction 4-methyl-5-(2-phosphooxyethyl)-thiazole + 4-amino-2-methyl-5-(diphosphooxymethyl)pyrimidine + H(+) = thiamine phosphate + diphosphate. The protein operates within cofactor biosynthesis; thiamine diphosphate biosynthesis; thiamine phosphate from 4-amino-2-methyl-5-diphosphomethylpyrimidine and 4-methyl-5-(2-phosphoethyl)-thiazole: step 1/1. In terms of biological role, condenses 4-methyl-5-(beta-hydroxyethyl)thiazole monophosphate (THZ-P) and 2-methyl-4-amino-5-hydroxymethyl pyrimidine pyrophosphate (HMP-PP) to form thiamine monophosphate (TMP). The sequence is that of Thiamine-phosphate synthase from Pyrococcus furiosus (strain ATCC 43587 / DSM 3638 / JCM 8422 / Vc1).